Consider the following 431-residue polypeptide: Isochorismate synthase MenF (431 aa).

The active-site Proton acceptor is the K190. The active-site Proton donor is the E240. Mg(2+) contacts are provided by E284 and E416.

The protein belongs to the isochorismate synthase family. Homodimer. Mg(2+) serves as cofactor.

It carries out the reaction chorismate = isochorismate. Its pathway is quinol/quinone metabolism; 1,4-dihydroxy-2-naphthoate biosynthesis; 1,4-dihydroxy-2-naphthoate from chorismate: step 1/7. It participates in quinol/quinone metabolism; menaquinone biosynthesis. Catalyzes the conversion of chorismate to isochorismate. Can also catalyze the reverse reaction, but with a lower efficiency. The polypeptide is Isochorismate synthase MenF (Escherichia coli (strain K12)).